Reading from the N-terminus, the 660-residue chain is UvrABC system protein B (660 aa).

One can recognise a Helicase ATP-binding domain in the interval 26 to 196; sequence DGIDEKKEHQ…ELNKGQFDVK (171 aa). Position 39–46 (39–46) interacts with ATP; that stretch reads GVTGSGKT. Residues 92–115 carry the Beta-hairpin motif; sequence YFDFYKPEAYIPKSDLYIEKTSKN. The region spanning 431–593 is the Helicase C-terminal domain; sequence QIEDIYDHLK…IIPKTIVKPI (163 aa). The region spanning 622–657 is the UVR domain; the sequence is KKFIDQMVRKMTQLAKANKFEEAIEIRDYLIEIGIE.

Belongs to the UvrB family. Forms a heterotetramer with UvrA during the search for lesions. Interacts with UvrC in an incision complex.

It localises to the cytoplasm. In terms of biological role, the UvrABC repair system catalyzes the recognition and processing of DNA lesions. A damage recognition complex composed of 2 UvrA and 2 UvrB subunits scans DNA for abnormalities. Upon binding of the UvrA(2)B(2) complex to a putative damaged site, the DNA wraps around one UvrB monomer. DNA wrap is dependent on ATP binding by UvrB and probably causes local melting of the DNA helix, facilitating insertion of UvrB beta-hairpin between the DNA strands. Then UvrB probes one DNA strand for the presence of a lesion. If a lesion is found the UvrA subunits dissociate and the UvrB-DNA preincision complex is formed. This complex is subsequently bound by UvrC and the second UvrB is released. If no lesion is found, the DNA wraps around the other UvrB subunit that will check the other stand for damage. This is UvrABC system protein B from Metamycoplasma arthritidis (strain 158L3-1) (Mycoplasma arthritidis).